The chain runs to 191 residues: Peptidyl-tRNA hydrolase (191 aa).

Tyrosine 14 is a binding site for tRNA. Histidine 19 (proton acceptor) is an active-site residue. 3 residues coordinate tRNA: tyrosine 64, asparagine 66, and asparagine 112.

Belongs to the PTH family. Monomer.

It localises to the cytoplasm. It carries out the reaction an N-acyl-L-alpha-aminoacyl-tRNA + H2O = an N-acyl-L-amino acid + a tRNA + H(+). Functionally, hydrolyzes ribosome-free peptidyl-tRNAs (with 1 or more amino acids incorporated), which drop off the ribosome during protein synthesis, or as a result of ribosome stalling. Catalyzes the release of premature peptidyl moieties from peptidyl-tRNA molecules trapped in stalled 50S ribosomal subunits, and thus maintains levels of free tRNAs and 50S ribosomes. In Clostridium beijerinckii (strain ATCC 51743 / NCIMB 8052) (Clostridium acetobutylicum), this protein is Peptidyl-tRNA hydrolase.